We begin with the raw amino-acid sequence, 104 residues long: Large ribosomal subunit protein uL24 (104 aa).

This sequence belongs to the universal ribosomal protein uL24 family. Part of the 50S ribosomal subunit.

Its function is as follows. One of two assembly initiator proteins, it binds directly to the 5'-end of the 23S rRNA, where it nucleates assembly of the 50S subunit. In terms of biological role, one of the proteins that surrounds the polypeptide exit tunnel on the outside of the subunit. The polypeptide is Large ribosomal subunit protein uL24 (Herminiimonas arsenicoxydans).